Reading from the N-terminus, the 353-residue chain is Ferredoxin--NADP reductase (353 aa).

FAD contacts are provided by threonine 25, glutamate 44, glutamine 52, tyrosine 57, valine 97, phenylalanine 132, aspartate 298, and serine 339.

This sequence belongs to the ferredoxin--NADP reductase type 2 family. Homodimer. FAD serves as cofactor.

The catalysed reaction is 2 reduced [2Fe-2S]-[ferredoxin] + NADP(+) + H(+) = 2 oxidized [2Fe-2S]-[ferredoxin] + NADPH. This is Ferredoxin--NADP reductase from Chlorobium phaeovibrioides (strain DSM 265 / 1930) (Prosthecochloris vibrioformis (strain DSM 265)).